Reading from the N-terminus, the 769-residue chain is Subtilisin-like protease 3 (769 aa).

N-linked (GlcNAc...) asparagine glycans are attached at residues Asn68, Asn102, Asn108, Asn295, Asn316, and Asn356. The span at Lys293–Asn302 shows a compositional bias: basic residues. Residues Lys293–Gln329 form a disordered region. A compositionally biased stretch (low complexity) spans Asn303–Ser325. One can recognise a Peptidase S8 domain in the interval Gly345–Val756. Asp372 serves as the catalytic Charge relay system. The tract at residues Asn468 to Asn493 is disordered. 2 N-linked (GlcNAc...) asparagine glycosylation sites follow: Asn482 and Asn515. The active-site Charge relay system is the His523. N-linked (GlcNAc...) asparagine glycans are attached at residues Asn584 and Asn616. Ser701 serves as the catalytic Charge relay system. N-linked (GlcNAc...) asparagine glycosylation is present at Asn720.

Belongs to the peptidase S8 family.

It is found in the secreted. The enzyme catalyses Hydrolysis of proteins with broad specificity for peptide bonds, and a preference for a large uncharged residue in P1. Hydrolyzes peptide amides.. In terms of biological role, serine protease which may cleave PFN/profilin. This Plasmodium falciparum (isolate 3D7) protein is Subtilisin-like protease 3.